The chain runs to 210 residues: Dephospho-CoA kinase (210 aa).

A DPCK domain is found at Trp4–Lys202. Gly12–Ala17 contributes to the ATP binding site.

This sequence belongs to the CoaE family.

The protein localises to the cytoplasm. The enzyme catalyses 3'-dephospho-CoA + ATP = ADP + CoA + H(+). It participates in cofactor biosynthesis; coenzyme A biosynthesis; CoA from (R)-pantothenate: step 5/5. Catalyzes the phosphorylation of the 3'-hydroxyl group of dephosphocoenzyme A to form coenzyme A. The sequence is that of Dephospho-CoA kinase from Neisseria gonorrhoeae.